Here is a 429-residue protein sequence, read N- to C-terminus: Adenylosuccinate synthetase (429 aa).

GTP contacts are provided by residues 12 to 18 (GDEGKGK) and 40 to 42 (GHT). The Proton acceptor role is filled by aspartate 13. Residues aspartate 13 and glycine 40 each contribute to the Mg(2+) site. IMP is bound by residues 13-16 (DEGK), 38-41 (NAGH), threonine 128, arginine 142, glutamine 223, and arginine 302. The Proton donor role is filled by histidine 41. 298 to 304 (TVTGRPR) provides a ligand contact to substrate. Residues arginine 304, 330-332 (LLD), and 412-414 (SVG) each bind GTP.

It belongs to the adenylosuccinate synthetase family. Homodimer. The cofactor is Mg(2+).

The protein localises to the cytoplasm. It catalyses the reaction IMP + L-aspartate + GTP = N(6)-(1,2-dicarboxyethyl)-AMP + GDP + phosphate + 2 H(+). The protein operates within purine metabolism; AMP biosynthesis via de novo pathway; AMP from IMP: step 1/2. Plays an important role in the de novo pathway of purine nucleotide biosynthesis. Catalyzes the first committed step in the biosynthesis of AMP from IMP. The polypeptide is Adenylosuccinate synthetase (Lactobacillus delbrueckii subsp. bulgaricus (strain ATCC 11842 / DSM 20081 / BCRC 10696 / JCM 1002 / NBRC 13953 / NCIMB 11778 / NCTC 12712 / WDCM 00102 / Lb 14)).